We begin with the raw amino-acid sequence, 132 residues long: MTMTDPIADMLSRVRNASNAYHDTVSMPSSNLKVHIAEILKQEGYIADFTVEDAKVGKTLTIELKYGSTRQRSLSGVRRVSSPGLRVYAKSTNLPQVLGGLGVAIISTSQGLLTDRQASEKGVGGEVLAYVW.

This sequence belongs to the universal ribosomal protein uS8 family. As to quaternary structure, part of the 30S ribosomal subunit. Contacts proteins S5 and S12.

Its function is as follows. One of the primary rRNA binding proteins, it binds directly to 16S rRNA central domain where it helps coordinate assembly of the platform of the 30S subunit. The protein is Small ribosomal subunit protein uS8 of Corynebacterium kroppenstedtii (strain DSM 44385 / JCM 11950 / CIP 105744 / CCUG 35717).